The following is a 142-amino-acid chain: Large ribosomal subunit protein uL13 (142 aa).

The protein belongs to the universal ribosomal protein uL13 family. In terms of assembly, part of the 50S ribosomal subunit.

This protein is one of the early assembly proteins of the 50S ribosomal subunit, although it is not seen to bind rRNA by itself. It is important during the early stages of 50S assembly. The polypeptide is Large ribosomal subunit protein uL13 (Bordetella bronchiseptica (strain ATCC BAA-588 / NCTC 13252 / RB50) (Alcaligenes bronchisepticus)).